Here is a 124-residue protein sequence, read N- to C-terminus: Large ribosomal subunit protein bL12 (124 aa).

This sequence belongs to the bacterial ribosomal protein bL12 family. In terms of assembly, homodimer. Part of the ribosomal stalk of the 50S ribosomal subunit. Forms a multimeric L10(L12)X complex, where L10 forms an elongated spine to which 2 to 4 L12 dimers bind in a sequential fashion. Binds GTP-bound translation factors.

Its function is as follows. Forms part of the ribosomal stalk which helps the ribosome interact with GTP-bound translation factors. Is thus essential for accurate translation. This is Large ribosomal subunit protein bL12 from Borreliella burgdorferi (strain ATCC 35210 / DSM 4680 / CIP 102532 / B31) (Borrelia burgdorferi).